Reading from the N-terminus, the 954-residue chain is Valine--tRNA ligase (954 aa).

A 'HIGH' region motif is present at residues 48 to 58; it reads PNVTGSLHMGH. Positions 560-564 match the 'KMSKS' region motif; that stretch reads KMSKS. ATP is bound at residue K563. The stretch at 883-953 forms a coiled coil; the sequence is AGFINKEAEL…IQEQYKAIEA (71 aa).

This sequence belongs to the class-I aminoacyl-tRNA synthetase family. ValS type 1 subfamily. As to quaternary structure, monomer.

It localises to the cytoplasm. The enzyme catalyses tRNA(Val) + L-valine + ATP = L-valyl-tRNA(Val) + AMP + diphosphate. Catalyzes the attachment of valine to tRNA(Val). As ValRS can inadvertently accommodate and process structurally similar amino acids such as threonine, to avoid such errors, it has a 'posttransfer' editing activity that hydrolyzes mischarged Thr-tRNA(Val) in a tRNA-dependent manner. This chain is Valine--tRNA ligase, found in Haemophilus influenzae (strain PittEE).